Here is a 976-residue protein sequence, read N- to C-terminus: Probable alanine--tRNA ligase, chloroplastic/mitochondrial (976 aa).

The N-terminal 54 residues, methionine 1–threonine 54, are a transit peptide targeting the chloroplast and mitochondrion. A disordered region spans residues leucine 71–glycine 95. Residues threonine 73–asparagine 85 show a composition bias toward polar residues.

Belongs to the class-II aminoacyl-tRNA synthetase family. Monomer. Zn(2+) is required as a cofactor.

It localises to the plastid. Its subcellular location is the chloroplast. It is found in the mitochondrion. It catalyses the reaction tRNA(Ala) + L-alanine + ATP = L-alanyl-tRNA(Ala) + AMP + diphosphate. Catalyzes the attachment of alanine to tRNA(Ala) in a two-step reaction: alanine is first activated by ATP to form Ala-AMP and then transferred to the acceptor end of tRNA(Ala). Also edits incorrectly charged tRNA(Ala) via its editing domain. The polypeptide is Probable alanine--tRNA ligase, chloroplastic/mitochondrial (Ostreococcus tauri).